Reading from the N-terminus, the 142-residue chain is Hemoglobin subunit alpha (142 aa).

The region spanning 2–142 is the Globin domain; sequence VLSPDDKKHV…VSTVLTSKYR (141 aa). Phosphoserine is present on S4. N6-succinyllysine occurs at positions 8 and 12. K17 bears the N6-acetyllysine; alternate mark. N6-succinyllysine; alternate is present on K17. Position 25 is a phosphotyrosine (Y25). Position 36 is a phosphoserine (S36). K41 bears the N6-succinyllysine mark. S50 bears the Phosphoserine mark. Residue H59 participates in O2 binding. A heme b-binding site is contributed by H88. S103 bears the Phosphoserine mark. T109 is subject to Phosphothreonine. S125 and S132 each carry phosphoserine. T135 and T138 each carry phosphothreonine. S139 is subject to Phosphoserine.

The protein belongs to the globin family. Heterotetramer of two alpha chains and two beta chains. In terms of tissue distribution, red blood cells.

Involved in oxygen transport from the lung to the various peripheral tissues. In terms of biological role, hemopressin acts as an antagonist peptide of the cannabinoid receptor CNR1. Hemopressin-binding efficiently blocks cannabinoid receptor CNR1 and subsequent signaling. In Papio anubis (Olive baboon), this protein is Hemoglobin subunit alpha (HBA).